The sequence spans 325 residues: Aspartate carbamoyltransferase catalytic subunit (325 aa).

Residues R64 and T65 each coordinate carbamoyl phosphate. K92 lines the L-aspartate pocket. Carbamoyl phosphate-binding residues include R114, H142, and Q145. L-aspartate contacts are provided by R176 and R230. Residues G271 and P272 each coordinate carbamoyl phosphate.

The protein belongs to the aspartate/ornithine carbamoyltransferase superfamily. ATCase family. In terms of assembly, heterododecamer (2C3:3R2) of six catalytic PyrB chains organized as two trimers (C3), and six regulatory PyrI chains organized as three dimers (R2).

The catalysed reaction is carbamoyl phosphate + L-aspartate = N-carbamoyl-L-aspartate + phosphate + H(+). The protein operates within pyrimidine metabolism; UMP biosynthesis via de novo pathway; (S)-dihydroorotate from bicarbonate: step 2/3. Its function is as follows. Catalyzes the condensation of carbamoyl phosphate and aspartate to form carbamoyl aspartate and inorganic phosphate, the committed step in the de novo pyrimidine nucleotide biosynthesis pathway. In Nitratidesulfovibrio vulgaris (strain DSM 19637 / Miyazaki F) (Desulfovibrio vulgaris), this protein is Aspartate carbamoyltransferase catalytic subunit.